The primary structure comprises 1069 residues: Adenylate-forming reductase (1069 aa).

The segment at 20 to 391 (HPEDPKAVKS…WKLRQDINYR (372 aa)) is adenylation (A) domain. AMP is bound by residues His262, 357 to 358 (AH), Thr362, and 437 to 440 (AVGR). Positions 576–656 (DSLEEDLKDL…KLGASLRHLA (81 aa)) constitute a Carrier domain. Position 612 is an O-(pantetheine 4'-phosphoryl)serine (Ser612). A reductase (R) domain region spans residues 686 to 1032 (TVLLTGSTGN…TGKVILDTSR (347 aa)). NADP(+)-binding positions include 693–696 (TGNL), Arg719, 785–787 (NAW), Tyr863, and Lys867.

It belongs to the adenylate-forming reductase family.

It catalyses the reaction 5-methylorsellinate + ATP + NADPH + H(+) = 2,4-dihydroxy 5,6-dimethylbenzaldehyde + AMP + diphosphate + NADP(+). Its pathway is secondary metabolite biosynthesis. Functionally, non-canonical non-ribosomal peptide synthetase; part of the cluster A that mediates the biosynthesis of azasperpyranones, members of the azaphilone family that exhibit anti-cancer activities. Azasperpyranones are synthesized by 2 clusters, A and B. Cluster A is responsible for the production of the polyhydric phenol moiety while the azaphilonoid scaffold is produced by the cluster B. The non-reducing polyketide synthase ATEG_03629 produces 5-methyl orsellinic acid, which is then reduced to 5-methyl orsellinic aldehyde by the NRPS-like protein ATEG_03630. 5-methyl orsellinic aldehyde is then first hydroxylated by the FAD-dependent monooxygenase ATEG_03635 and subsequently hydroxylated by the cytochrome P450 monooxygenase ATEG_03631 to produce the unstable polyhydric phenol precursor of azasperpyranones. On the other hand, the polyketide synthase ATEG_07659 is responsible for producing the 3,5-dimethyloctadienone moiety from acetyl-CoA, three malonyl-CoA, and two S-adenosyl methionines (SAM). The 3,5-dimethyloctadienone moiety is then loaded onto the SAT domain of ATEG_07661 and extended with four malonyl-CoA and one SAM, which leads to the formation of 2,4-dihydroxy-6-(5,7-dimethyl-2-oxo-trans-3-trans-5-nonadienyl)-3-methylbenzaldehyde (compound 8) after reductive release and aldol condensation. The FAD-dependent monooxygenase ATEG_07662 is the next enzyme in the biosynthesis sequence and hydroxylates the side chain at the benzylic position of compound 8. In Aspergillus nidulans, afoF, the ortholog of the FAD-dependent oxygenase ATEG_07660, is the key enzyme for the biosynthesis of asperfuranone by catalyzing the hydroxylation at C-8 of to prevent the formation of a six-membered ring hemiacetal intermediate and thus facilitating the formation of a five-membered ring to produce asperfuranone. In Aspergillus terreus, ATEG_07660 is probably not functional, which leads to the formation of the six-membered ring hemiacetal intermediate presperpyranone instead of asperfuranone. Finally, ATEG_03636 is involved in the condensation of the polyhydric phenol moiety produced by cluster A and the perasperpyranone precursor produced by cluster B, to yield azasperpyranone A. Further modifications of azasperpyranone A result in the production of derivatives, including azasperpyranone B to F. The protein is Adenylate-forming reductase of Aspergillus terreus (strain NIH 2624 / FGSC A1156).